The primary structure comprises 177 residues: Large ribosomal subunit protein uL6 (177 aa).

The protein belongs to the universal ribosomal protein uL6 family. In terms of assembly, part of the 50S ribosomal subunit.

Functionally, this protein binds to the 23S rRNA, and is important in its secondary structure. It is located near the subunit interface in the base of the L7/L12 stalk, and near the tRNA binding site of the peptidyltransferase center. This chain is Large ribosomal subunit protein uL6, found in Methanosarcina barkeri (strain Fusaro / DSM 804).